The sequence spans 256 residues: Ubiquinone/menaquinone biosynthesis C-methyltransferase UbiE (256 aa).

The span at 1-12 shows a compositional bias: basic and acidic residues; the sequence is MNDQRKGEHAEP. The segment at 1-21 is disordered; it reads MNDQRKGEHAEPTTHFGYQDV. S-adenosyl-L-methionine-binding positions include Thr-79, Asp-100, and 128–129; that span reads DA.

Belongs to the class I-like SAM-binding methyltransferase superfamily. MenG/UbiE family.

The enzyme catalyses a 2-demethylmenaquinol + S-adenosyl-L-methionine = a menaquinol + S-adenosyl-L-homocysteine + H(+). It carries out the reaction a 2-methoxy-6-(all-trans-polyprenyl)benzene-1,4-diol + S-adenosyl-L-methionine = a 5-methoxy-2-methyl-3-(all-trans-polyprenyl)benzene-1,4-diol + S-adenosyl-L-homocysteine + H(+). It participates in quinol/quinone metabolism; menaquinone biosynthesis; menaquinol from 1,4-dihydroxy-2-naphthoate: step 2/2. It functions in the pathway cofactor biosynthesis; ubiquinone biosynthesis. Methyltransferase required for the conversion of demethylmenaquinol (DMKH2) to menaquinol (MKH2) and the conversion of 2-polyprenyl-6-methoxy-1,4-benzoquinol (DDMQH2) to 2-polyprenyl-3-methyl-6-methoxy-1,4-benzoquinol (DMQH2). This chain is Ubiquinone/menaquinone biosynthesis C-methyltransferase UbiE, found in Pseudomonas putida (strain W619).